We begin with the raw amino-acid sequence, 505 residues long: MDELIMMVFVLFTIVLLLTVSMTLAALISTIVVLVVPLIICIIALLIALRIKYGSKKDLSEVSIGFFHPYCTAGGGGERVLWCAIKSIQEEYPYVRCVVYTGDKESDDEIFNKVKKTFDIELGRDNLEFIRLKKRKWVEASTYPRFTLIGQSLGSMILGWEALTKFVPTIFLDSMGYAFTFPIFSLIGGSTVACYVHYPTISSDMISSVKSSSYSFNNDVSISSNKFKTISKLIYYNIFSKIYQIVGSFSKLVMVNGTWTGNHIRDIWKKQFGYDLFIVYPPVDVKGRKQLKLGWMDGTRKNMILSIAQFRPEKNHQLQLRTLAHLLEKYPSHREQPLNTKLVLVGGVRDQADRDRVEQLRNLSKELNIEDHVEFQIGISSDQLNQLLSEASVGIHTMYNEHFGIGVVELMAAGVIPVANNSAGPKEDIVRHEDTGFLASTIQEYAEYIHEILAYREKYVEMQKKARDSTDRFSESNFSNQFLKYIKPLINQSLRNNNSSSKKRN.

The Lumenal segment spans residues 1 to 3 (MDE). A helical membrane pass occupies residues 4–24 (LIMMVFVLFTIVLLLTVSMTL). Topologically, residues 25 to 145 (AALISTIVVL…KWVEASTYPR (121 aa)) are cytoplasmic. An intramembrane region (helical) is located at residues 146–166 (FTLIGQSLGSMILGWEALTKF). At 167 to 402 (VPTIFLDSMG…VGIHTMYNEH (236 aa)) the chain is on the cytoplasmic side. The segment at residues 403–423 (FGIGVVELMAAGVIPVANNSA) is an intramembrane region (helical). Over 424 to 505 (GPKEDIVRHE…NNNSSSKKRN (82 aa)) the chain is Cytoplasmic.

It belongs to the glycosyltransferase group 1 family.

The protein resides in the endoplasmic reticulum membrane. It carries out the reaction an alpha-D-Man-(1-&gt;3)-[alpha-D-Man-(1-&gt;6)]-beta-D-Man-(1-&gt;4)-beta-D-GlcNAc-(1-&gt;4)-alpha-D-GlcNAc-diphospho-di-trans,poly-cis-dolichol + 2 GDP-alpha-D-mannose = an alpha-D-Man-(1-&gt;2)-alpha-D-Man-(1-&gt;2)-alpha-D-Man-(1-&gt;3)-[alpha-D-Man-(1-&gt;6)]-beta-D-Man-(1-&gt;4)-beta-D-GlcNAc-(1-&gt;4)-alpha-D-GlcNAc-diphospho-di-trans,poly-cis-dolichol + 2 GDP + 2 H(+). Its pathway is protein modification; protein glycosylation. In terms of biological role, GDP-Man:Man(3)GlcNAc(2)-PP-Dol alpha-1,2-mannosyltransferase that operates in the biosynthetic pathway of dolichol-linked oligosaccharides, the glycan precursors employed in protein asparagine (N)-glycosylation. The assembly of dolichol-linked oligosaccharides begins on the cytosolic side of the endoplasmic reticulum membrane and finishes in its lumen. The sequential addition of sugars to dolichol pyrophosphate produces dolichol-linked oligosaccharides containing fourteen sugars, including two GlcNAcs, nine mannoses and three glucoses. Once assembled, the oligosaccharide is transferred from the lipid to nascent proteins by oligosaccharyltransferases. Catalyzes, on the cytoplasmic face of the endoplasmic reticulum, the addition of the fourth and fifth mannose residues to the dolichol-linked oligosaccharide chain, to produce Man(5)GlcNAc(2)-PP-dolichol core oligosaccharide. This is GDP-Man:Man(3)GlcNAc(2)-PP-Dol alpha-1,2-mannosyltransferase (alg11) from Dictyostelium discoideum (Social amoeba).